A 348-amino-acid polypeptide reads, in one-letter code: GTP 3',8-cyclase (348 aa).

The Radical SAM core domain occupies 24 to 242; it reads PFGRAVTYLR…EKQFTLTDID (219 aa). R33 provides a ligand contact to GTP. The [4Fe-4S] cluster site is built by C40 and C44. Y46 provides a ligand contact to S-adenosyl-L-methionine. Residue C47 participates in [4Fe-4S] cluster binding. R82 is a binding site for GTP. S-adenosyl-L-methionine is bound at residue G86. Residue T115 coordinates GTP. An S-adenosyl-L-methionine-binding site is contributed by S139. Residue K175 participates in GTP binding. An S-adenosyl-L-methionine-binding site is contributed by M209. Positions 272 and 275 each coordinate [4Fe-4S] cluster. 277–279 contributes to the GTP binding site; sequence RVR. [4Fe-4S] cluster is bound at residue C289.

The protein belongs to the radical SAM superfamily. MoaA family. Monomer and homodimer. [4Fe-4S] cluster serves as cofactor.

The catalysed reaction is GTP + AH2 + S-adenosyl-L-methionine = (8S)-3',8-cyclo-7,8-dihydroguanosine 5'-triphosphate + 5'-deoxyadenosine + L-methionine + A + H(+). It functions in the pathway cofactor biosynthesis; molybdopterin biosynthesis. Its function is as follows. Catalyzes the cyclization of GTP to (8S)-3',8-cyclo-7,8-dihydroguanosine 5'-triphosphate. This is GTP 3',8-cyclase from Rhizobium leguminosarum bv. trifolii (strain WSM2304).